The sequence spans 340 residues: Cytochrome c peroxidase, mitochondrial (340 aa).

Residues 1–17 (MRSFRAVRNFSTTAKRL) constitute a mitochondrion transit peptide. His101 (proton acceptor) is an active-site residue. The tract at residues 175–198 (WKRGRVDEPESASPPDGSLPDASQ) is disordered. Position 224 (His224) interacts with heme b. Catalysis depends on Trp240, which acts as the Tryptophan radical intermediate.

The protein belongs to the peroxidase family. Cytochrome c peroxidase subfamily. In terms of assembly, forms a one-to-one complex with cytochrome c. Heme b serves as cofactor.

The protein localises to the mitochondrion matrix. It is found in the mitochondrion intermembrane space. It catalyses the reaction 2 Fe(II)-[cytochrome c] + H2O2 + 2 H(+) = 2 Fe(III)-[cytochrome c] + 2 H2O. Functionally, destroys radicals which are normally produced within the cells and which are toxic to biological systems. The protein is Cytochrome c peroxidase, mitochondrial (CCP1) of Yarrowia lipolytica (strain CLIB 122 / E 150) (Yeast).